The primary structure comprises 369 residues: UPF0283 membrane protein RPA1583 (369 aa).

Residues 1–61 (MTERVPPRRP…APPPPPPRAR (61 aa)) form a disordered region. Low complexity predominate over residues 34-51 (AKPSAKADARPAASAAGA). Transmembrane regions (helical) follow at residues 90–110 (WGTV…WLWI), 124–144 (LGTI…IIIG), and 239–259 (VSLV…VAIA).

This sequence belongs to the UPF0283 family.

It is found in the cell inner membrane. This Rhodopseudomonas palustris (strain ATCC BAA-98 / CGA009) protein is UPF0283 membrane protein RPA1583.